Here is a 1556-residue protein sequence, read N- to C-terminus: MSAVGALLAREYNVTAEKCDFFLENGSFDSVIAALPALNQEQETVTQKVSKNGKELINVASVNIEIPERISLSNNGRQLFKFIVDIEILPCENDNEATLVVSSDSVSLFQIGFKMENNSKIAVDKQLPLILDICAHKNQERALRNQLENRKSLERKPSRKRRKKNSNVNDPEKLLKSRIHELSLSYKDFECSPVVFRYNDSSLTWVLSFNLKLKFLNNKFNRFSVEANQILDLTFSNRDENEFERYHKHSHIHSNFIQKQFISQILEYSKDRLSKIKPFLPQSIPDLKVNLLPFQRESVEWMLIKEGHGNSLSDTPTVIDEVGLIDFMNEYYAYGYELIARSPDEVGPSLLWNKLTGYILTTEDAAHLYNQYRKERLSGDYPVCAKGVLAEEMGLGKTIEILSLILLNRRKLKDSEATFIDDENRTITKTKTTLIICPNAILKQWLEEIELHANSLKWYTYRGYNEIMKDCKTVDEAVQQLCQYDIIVTSYNIIATEVHHAEFNRSIRSRRLKSPKYDYSSPLALMQFYRIILDEVQMLRSSSTYSAKCTSLLHRIHTWGVSGTPIQNIYNFRMIMSYLKLHPFCDEVDFIRTLQEEIKLRNEAKDYTSNDFVCQLKGVRFSIKDCMNIFYRYDLCIRHSKANVASQIHIPRQHNFIIPLEFAPIEWDNYLNLWNNFLELSGYNSDGSGSPRVSNAFLNEWLSRLRYICCHALFPEILSTRQKRLHGHLSRISNIDDILISMRMDAFDSLIGYYRERFHLSIKQAQYELEISNTPAKALESFIKIRDDLMIHIRQKFNVEDPFDKSLNLSEDEDEHMDERFGEKETSSGDESDREINGAKNHDNHNNDGMLSNHLKKKGLRAMMNLLHDCYFFLGSVYYNLGTRKLEEADDKHRKEKTEEVVYSDVFPKNELEEIEENRLLEQENYANAEILRKSILSSEARKVDMTIKMARTKFAPMTSNIPLRLINIEFDHKNDYSSNLAVSRCFKSLSKLIEGLNEQTKNFNELLDELLIIIYEPVHRTEDDDSTNKIIGNEEYSTSIDSQDKIFSLLGCLEIILQNRDNILTSESEVKIPKHLVPEGSIISKYQKQLLNSLRLISGTPLRTVFDELKNSRIVRRISSSNESESTIQNFEDYLLQYEVESKSLFKYNKQVRESLKILGSIYNAKTEYYSQLQRISDSLVSLHSLSAPQLSHLIRTINKSLGGTLDAKINNIESRLIYLKNLSRLKDTLNDNQILSCSICLGEVEIGAIIKCGHYFCKSCILTWLRAHSKCPICKGFCSISEVYNFKFKNSTEKREKEIQEPRREGADSSQDNSNENSIISNMSEVEKLFGNKYEQFHQINEVHQIHIKESFGAKIDFVIKLISYLRLKSEQENADPPQVILYSQKTEYLKVIGKVLKLYHIEHLACLSNTANVGETINNFKRQPSVTCLLLNVKTLGAGLNLINAKHIFLLDPILNNSDELQAMGRNNRIGQDEETFVWNFMIRNTVEENILRYKCILEERKRKEKSKKGDKYDEAQDETDNEESDDAKFEISVVDQEVSNEHLWNCFFHGSD.

Ser-2 is subject to N-acetylserine. Residues 145–156 show a composition bias toward basic and acidic residues; sequence NQLENRKSLERK. A disordered region spans residues 145 to 170; it reads NQLENRKSLERKPSRKRRKKNSNVND. In terms of domain architecture, Helicase ATP-binding spans 378 to 583; that stretch reads SGDYPVCAKG…MIMSYLKLHP (206 aa). 391–398 contributes to the ATP binding site; the sequence is EEMGLGKT. At Ser-810 the chain carries Phosphoserine. Positions 810–850 are disordered; the sequence is SEDEDEHMDERFGEKETSSGDESDREINGAKNHDNHNNDGM. Basic and acidic residues-rich tracts occupy residues 817 to 827 and 834 to 846; these read MDERFGEKETS and REIN…DNHN. The segment at 1239 to 1277 adopts an RING-type zinc-finger fold; the sequence is CSICLGEVEIGAIIKCGHYFCKSCILTWLRAHSKCPICK. Basic and acidic residues predominate over residues 1297-1309; that stretch reads REKEIQEPRREGA. 2 disordered regions span residues 1297-1319 and 1508-1534; these read REKE…SNEN and EKSK…AKFE. A compositionally biased stretch (low complexity) spans 1310–1319; that stretch reads DSSQDNSNEN. In terms of domain architecture, Helicase C-terminal spans 1363-1531; the sequence is KLISYLRLKS…ETDNEESDDA (169 aa). The segment covering 1508–1518 has biased composition (basic and acidic residues); sequence EKSKKGDKYDE. The segment covering 1519–1529 has biased composition (acidic residues); the sequence is AQDETDNEESD.

Belongs to the SNF2/RAD54 helicase family.

It is found in the nucleus. In terms of biological role, is probably involved in a pathway contributing to genomic integrity. This is an uncharacterized protein from Saccharomyces cerevisiae (strain ATCC 204508 / S288c) (Baker's yeast).